The sequence spans 637 residues: DNA gyrase subunit B (637 aa).

In terms of domain architecture, Toprim spans 422-536 (CEVYIVEGDS…AGYVYLAMPP (115 aa)). Mg(2+) is bound by residues glutamate 428, aspartate 501, and aspartate 503.

This sequence belongs to the type II topoisomerase GyrB family. Heterotetramer, composed of two GyrA and two GyrB chains. In the heterotetramer, GyrA contains the active site tyrosine that forms a transient covalent intermediate with DNA, while GyrB binds cofactors and catalyzes ATP hydrolysis. Mg(2+) serves as cofactor. Mn(2+) is required as a cofactor. Requires Ca(2+) as cofactor.

Its subcellular location is the cytoplasm. The catalysed reaction is ATP-dependent breakage, passage and rejoining of double-stranded DNA.. A type II topoisomerase that negatively supercoils closed circular double-stranded (ds) DNA in an ATP-dependent manner to modulate DNA topology and maintain chromosomes in an underwound state. Negative supercoiling favors strand separation, and DNA replication, transcription, recombination and repair, all of which involve strand separation. Also able to catalyze the interconversion of other topological isomers of dsDNA rings, including catenanes and knotted rings. Type II topoisomerases break and join 2 DNA strands simultaneously in an ATP-dependent manner. The sequence is that of DNA gyrase subunit B from Treponema pallidum (strain Nichols).